The following is a 187-amino-acid chain: Ponticulin-like protein K (187 aa).

The first 19 residues, 1–19 (MKNLILLFLLISIINLIQS), serve as a signal peptide directing secretion. N-linked (GlcNAc...) asparagine glycans are attached at residues asparagine 31, asparagine 70, asparagine 86, asparagine 93, asparagine 119, asparagine 128, asparagine 146, asparagine 160, and asparagine 161. Residues 115–146 (PSPSNSSNPSPSPNTTSSSSLSSSSLNSNEPN) show a composition bias toward low complexity. The segment at 115–161 (PSPSNSSNPSPSPNTTSSSSLSSSSLNSNEPNQTTKPPKTNEPQKNN) is disordered. Residues 147–161 (QTTKPPKTNEPQKNN) show a composition bias toward polar residues. Residue asparagine 161 is the site of GPI-like-anchor amidated asparagine attachment. The propeptide at 162-187 (STSNIPNFFAIFGFLVLIIFILGDKI) is removed in mature form.

It belongs to the ponticulin family. In terms of processing, the GPI-like-anchor contains a phosphoceramide group, rather than a phosphatidyl group.

It is found in the cell membrane. Functionally, binds F-actin and nucleates actin assembly. This Dictyostelium discoideum (Social amoeba) protein is Ponticulin-like protein K (ponK).